The following is a 160-amino-acid chain: Ribosomal RNA large subunit methyltransferase H (160 aa).

S-adenosyl-L-methionine is bound by residues Leu76 and Gly108.

Belongs to the RNA methyltransferase RlmH family. As to quaternary structure, homodimer.

Its subcellular location is the cytoplasm. The catalysed reaction is pseudouridine(1915) in 23S rRNA + S-adenosyl-L-methionine = N(3)-methylpseudouridine(1915) in 23S rRNA + S-adenosyl-L-homocysteine + H(+). In terms of biological role, specifically methylates the pseudouridine at position 1915 (m3Psi1915) in 23S rRNA. This chain is Ribosomal RNA large subunit methyltransferase H, found in Afipia carboxidovorans (strain ATCC 49405 / DSM 1227 / KCTC 32145 / OM5) (Oligotropha carboxidovorans).